A 247-amino-acid chain; its full sequence is Probable transcriptional regulatory protein Gbem_3313 (247 aa).

The protein belongs to the TACO1 family.

The protein localises to the cytoplasm. The sequence is that of Probable transcriptional regulatory protein Gbem_3313 from Citrifermentans bemidjiense (strain ATCC BAA-1014 / DSM 16622 / JCM 12645 / Bem) (Geobacter bemidjiensis).